The following is a 698-amino-acid chain: DNA ligase (698 aa).

Residues D40 to D44, S89 to L90, and E123 each bind NAD(+). The active-site N6-AMP-lysine intermediate is K125. NAD(+) is bound by residues R146, E184, K300, and K324. Positions 418, 421, 436, and 442 each coordinate Zn(2+). The region spanning A620–G698 is the BRCT domain.

Belongs to the NAD-dependent DNA ligase family. LigA subfamily. Requires Mg(2+) as cofactor. The cofactor is Mn(2+).

It carries out the reaction NAD(+) + (deoxyribonucleotide)n-3'-hydroxyl + 5'-phospho-(deoxyribonucleotide)m = (deoxyribonucleotide)n+m + AMP + beta-nicotinamide D-nucleotide.. DNA ligase that catalyzes the formation of phosphodiester linkages between 5'-phosphoryl and 3'-hydroxyl groups in double-stranded DNA using NAD as a coenzyme and as the energy source for the reaction. It is essential for DNA replication and repair of damaged DNA. This Rhodospirillum rubrum (strain ATCC 11170 / ATH 1.1.1 / DSM 467 / LMG 4362 / NCIMB 8255 / S1) protein is DNA ligase.